A 197-amino-acid polypeptide reads, in one-letter code: Nucleoid occlusion factor SlmA (197 aa).

The 61-residue stretch at 7–67 folds into the HTH tetR-type domain; it reads INRREHILQC…GLIEFIEESL (61 aa). The segment at residues 30–49 is a DNA-binding region (H-T-H motif); sequence TTAKLAAEVGVSEAALYRHF. A coiled-coil region spans residues 109-136; sequence DALLGENERLRSRISQLFAKIETHLKQI.

The protein belongs to the nucleoid occlusion factor SlmA family. Homodimer. Interacts with FtsZ.

Its subcellular location is the cytoplasm. The protein localises to the nucleoid. Required for nucleoid occlusion (NO) phenomenon, which prevents Z-ring formation and cell division over the nucleoid. Acts as a DNA-associated cell division inhibitor that binds simultaneously chromosomal DNA and FtsZ, and disrupts the assembly of FtsZ polymers. SlmA-DNA-binding sequences (SBS) are dispersed on non-Ter regions of the chromosome, preventing FtsZ polymerization at these regions. The protein is Nucleoid occlusion factor SlmA of Shewanella halifaxensis (strain HAW-EB4).